The sequence spans 178 residues: Small ribosomal subunit protein uS5 (178 aa).

The S5 DRBM domain occupies 15 to 78 (FEEKIIEIRR…SAAKRNIVEV (64 aa)).

The protein belongs to the universal ribosomal protein uS5 family. In terms of assembly, part of the 30S ribosomal subunit. Contacts proteins S4 and S8.

In terms of biological role, with S4 and S12 plays an important role in translational accuracy. Located at the back of the 30S subunit body where it stabilizes the conformation of the head with respect to the body. The chain is Small ribosomal subunit protein uS5 from Thermotoga maritima (strain ATCC 43589 / DSM 3109 / JCM 10099 / NBRC 100826 / MSB8).